We begin with the raw amino-acid sequence, 635 residues long: Ankyrin repeat and SOCS box protein 2 (635 aa).

A required for FLNA degradation region spans residues 8–16 (RGSQCTIGQ). Residues 26-45 (SEDELVQMAIEQSLADKTRG) enclose the UIM domain. 12 ANK repeats span residues 104–133 (APAD…NLAE), 137–167 (EGWL…TIDQ), 171–200 (QEET…EPDI), 204–233 (SRET…DTNH), 237–266 (RGWT…KVES), 270–299 (YGIT…DINT), 303–332 (DNAS…DANK), 336–365 (DGLL…RTRI), 368–397 (SGVS…DVNT), 410–439 (RRSS…DPNR), 440–469 (DVIS…NIDA), and 476–504 (TAFP…DGEP). S371 is modified (phosphoserine; by MAPK). The 50-residue stretch at 586–635 (IKEKAEPPRPLAHLCRLRVRKAIGKYRIKLLDTLPLPGRLIRYLKYENTQ) folds into the SOCS box domain.

Belongs to the ankyrin SOCS box (ASB) family. In terms of assembly, component of a probable ECS E3 ubiquitin-protein ligase complex which contains CUL5, either RBX1 or RNF7/RBX2, Elongin BC complex (ELOB and ELOC) and ASB2. Interacts with SKP2. Through its interaction with SKP2, likely to bridge the formation of dimeric E3-ubiquitin-protein ligase complexes composed of an ECS complex and an SCF(SKP2) complex. Interacts with JAK2; the interaction targets JAK2 for Notch-mediated proteasomal degradation. Interacts with TCF3/E2A; the interaction is mediated by SKP2 and targets TCF3 for Notch-mediated proteasomal degradation. Interacts with DES. Monoubiquitinated. Post-translationally, not monoubiquitinated. In terms of processing, phosphorylation at Ser-371 is required for association with FLNA and subsequent FLNA degradation. Expressed in muscle cells. In terms of tissue distribution, expressed in hematopoietic cells.

It localises to the cytoplasm. Its subcellular location is the cytoskeleton. The protein resides in the stress fiber. It is found in the myofibril. The protein localises to the sarcomere. It localises to the z line. The protein operates within protein modification; protein ubiquitination. Its function is as follows. Substrate-recognition component of a SCF-like ECS (Elongin-Cullin-SOCS-box protein) E3 ubiquitin-protein ligase complex which mediates the ubiquitination and subsequent proteasomal degradation of target proteins. Mediates Notch-induced ubiquitination and degradation of substrates including TCF3/E2A and JAK2. Required during embryonic heart development for complete heart looping. Required for cardiomyocyte differentiation. Specifically promotes the ubiquitination of SMAD9 and targets it for proteasomal degradation, leading to avoid excessive accumulation of SMAD9. Plays a role in the regulation of NK-cell migration by modulating protein levels of filamin A/FLNA via regulation of its ubiquitination and proteasome degradation. In terms of biological role, involved in myogenic differentiation and targets filamin FLNB for proteasomal degradation but not filamin FLNA. Also targets DES for proteasomal degradation. Acts as a negative regulator of skeletal muscle mass. Targets filamins FLNA and FLNB for proteasomal degradation. This leads to enhanced adhesion of hematopoietic cells to fibronectin. Required for FLNA degradation in immature cardiomyocytes which is necessary for actin cytoskeleton remodeling, leading to proper organization of myofibrils and function of mature cardiomyocytes. Required for degradation of FLNA and FLNB in immature dendritic cells (DC) which enhances immature DC migration by promoting DC podosome formation and DC-mediated degradation of the extracellular matrix. Does not promote proteasomal degradation of tyrosine-protein kinases JAK1 or JAK2 in hematopoietic cells. This is Ankyrin repeat and SOCS box protein 2 (ASB2) from Homo sapiens (Human).